A 463-amino-acid polypeptide reads, in one-letter code: Argininosuccinate lyase (463 aa).

The protein belongs to the lyase 1 family. Argininosuccinate lyase subfamily.

It is found in the cytoplasm. It catalyses the reaction 2-(N(omega)-L-arginino)succinate = fumarate + L-arginine. It functions in the pathway amino-acid biosynthesis; L-arginine biosynthesis; L-arginine from L-ornithine and carbamoyl phosphate: step 3/3. The protein is Argininosuccinate lyase of Thiobacillus denitrificans (strain ATCC 25259 / T1).